A 931-amino-acid chain; its full sequence is Neuropilin-2 (931 aa).

The N-terminal stretch at 1-20 (MDMFPLTWVFLALYFSGHEV) is a signal peptide. Topologically, residues 21 to 864 (RSQQDPPCGG…EKSWLYTLDP (844 aa)) are extracellular. 3 cysteine pairs are disulfide-bonded: C28–C55, C83–C105, and C149–C175. CUB domains are found at residues 28–142 (CGGR…YEIF) and 149–267 (CSKN…YYLI). N-linked (GlcNAc...) asparagine glycosylation is found at N152 and N157. The Ca(2+) site is built by E197, D211, and D252. An intrachain disulfide couples C208 to C230. 2 disulfides stabilise this stretch: C277-C427 and C434-C592. F5/8 type C domains are found at residues 277-427 (CNVP…LFGC) and 434-592 (CSNM…VLGC). A compositionally biased stretch (polar residues) spans 298 to 310 (TFSDGRWTPQQSR). The tract at residues 298 to 317 (TFSDGRWTPQQSRLHGDDNG) is disordered. Residues 601–621 (VETLGPTVKSEETTTPYPMDE) form a disordered region. N629 is a glycosylation site (N-linked (GlcNAc...) asparagine). Residues 642 to 802 (SGFNCNFDFP…TDVPLENCME (161 aa)) form the MAM domain. The tract at residues 819–854 (THGGEGYEDEIDDEYEGDWSNSSSSTSGAGDPSSGK) is disordered. A compositionally biased stretch (acidic residues) spans 824-835 (GYEDEIDDEYEG). Residues 836-851 (DWSNSSSSTSGAGDPS) show a composition bias toward low complexity. N839 carries N-linked (GlcNAc...) asparagine glycosylation. Residues 865–889 (ILITIIAMSSLGVLLGATCAGLLLY) traverse the membrane as a helical segment. Residues 890–931 (CTCSYSGLSSRSCTTLENYNFELYDGLKHKVKINHQKCCSEA) lie on the Cytoplasmic side of the membrane.

It belongs to the neuropilin family. Heterodimer with NRP1. Binds PLXNB1. As to expression, expressed in developing CNS, PNS and in some nonneural tissues including limb buds, developing bones, muscles, intestinal epithelium, kidney, lung and submandibular gland.

The protein resides in the membrane. High affinity receptor for semaphorins 3C, 3F, VEGF-165 and VEGF-145 isoforms of VEGF, and the PLGF-2 isoform of PGF. The sequence is that of Neuropilin-2 (Nrp2) from Mus musculus (Mouse).